A 213-amino-acid polypeptide reads, in one-letter code: Thiamine-phosphate synthase (213 aa).

Residues 40–44 (QFREK) and asparagine 75 contribute to the 4-amino-2-methyl-5-(diphosphooxymethyl)pyrimidine site. Aspartate 76 and aspartate 95 together coordinate Mg(2+). Position 113 (serine 113) interacts with 4-amino-2-methyl-5-(diphosphooxymethyl)pyrimidine. Position 139–141 (139–141 (TPS)) interacts with 2-[(2R,5Z)-2-carboxy-4-methylthiazol-5(2H)-ylidene]ethyl phosphate. Lysine 142 contacts 4-amino-2-methyl-5-(diphosphooxymethyl)pyrimidine. Residues glycine 171 and 191 to 192 (IS) contribute to the 2-[(2R,5Z)-2-carboxy-4-methylthiazol-5(2H)-ylidene]ethyl phosphate site.

It belongs to the thiamine-phosphate synthase family. Requires Mg(2+) as cofactor.

It catalyses the reaction 2-[(2R,5Z)-2-carboxy-4-methylthiazol-5(2H)-ylidene]ethyl phosphate + 4-amino-2-methyl-5-(diphosphooxymethyl)pyrimidine + 2 H(+) = thiamine phosphate + CO2 + diphosphate. The catalysed reaction is 2-(2-carboxy-4-methylthiazol-5-yl)ethyl phosphate + 4-amino-2-methyl-5-(diphosphooxymethyl)pyrimidine + 2 H(+) = thiamine phosphate + CO2 + diphosphate. It carries out the reaction 4-methyl-5-(2-phosphooxyethyl)-thiazole + 4-amino-2-methyl-5-(diphosphooxymethyl)pyrimidine + H(+) = thiamine phosphate + diphosphate. Its pathway is cofactor biosynthesis; thiamine diphosphate biosynthesis; thiamine phosphate from 4-amino-2-methyl-5-diphosphomethylpyrimidine and 4-methyl-5-(2-phosphoethyl)-thiazole: step 1/1. In terms of biological role, condenses 4-methyl-5-(beta-hydroxyethyl)thiazole monophosphate (THZ-P) and 2-methyl-4-amino-5-hydroxymethyl pyrimidine pyrophosphate (HMP-PP) to form thiamine monophosphate (TMP). The protein is Thiamine-phosphate synthase of Staphylococcus aureus (strain MSSA476).